Reading from the N-terminus, the 217-residue chain is MNTYNDNPKQCLKKIVESASAKFNESVDIAVNLGVDSRKSEEQVRGTVVLPKGIGKNIKVAVFAQDKHLLEAEKAGADIAGGEDLVEEIKKGRKLDVDWCITTPDFMAKITPIAKVLGVKGLMPNPKFGTVTSNIAEAIKTIKSGQVKFGTDKNGVIHGKLGNIKFDIDDLLENLKAFLKVIKDNKPISAKGIYFKGVFLNSTMGKAYKIGKVEDII.

This sequence belongs to the universal ribosomal protein uL1 family. Part of the 50S ribosomal subunit.

Functionally, binds directly to 23S rRNA. The L1 stalk is quite mobile in the ribosome, and is involved in E site tRNA release. Protein L1 is also a translational repressor protein, it controls the translation of the L11 operon by binding to its mRNA. The protein is Large ribosomal subunit protein uL1 of Wolbachia pipientis wMel.